Consider the following 363-residue polypeptide: Forkhead box protein I1 (363 aa).

The span at 1 to 18 shows a compositional bias: low complexity; the sequence is MNPVQQPAQQRSPASSLP. Disordered regions lie at residues 1 to 24, 210 to 269, and 344 to 363; these read MNPVQQPAQQRSPASSLPHPKRAQ, DNGN…SPPA, and TTAQKQPQFLQQPPLYQGRY. The fork-head DNA-binding region spans 125–219; the sequence is RPPYSYSALI…DNGNFRRKRK (95 aa). Basic and acidic residues predominate over residues 231 to 243; it reads KIGEDHLNPKGKE. 2 stretches are compositionally biased toward low complexity: residues 244–258 and 347–363; these read SPPMITPSSPEEPSP and QKQPQFLQQPPLYQGRY.

The protein localises to the nucleus. Functionally, transcription factor. Essential for ventral specification of the early cephalic (head) ectoderm during gastrulation, playing a role in the 'non-neural' versus 'neural' cell fate choice. Binds to DNA via the target sequence 5'-[AG]TAAA[CT]A-3', with 5'-ATAAACA-3' being the preferred binding site. The protein is Forkhead box protein I1 of Xenopus tropicalis (Western clawed frog).